Consider the following 186-residue polypeptide: Ribosome maturation factor RimM (186 aa).

The 72-residue stretch at 103-174 (PEEYHYSDLI…ELQVQPPPGL (72 aa)) folds into the PRC barrel domain.

The protein belongs to the RimM family. Binds ribosomal protein uS19.

It localises to the cytoplasm. Functionally, an accessory protein needed during the final step in the assembly of 30S ribosomal subunit, possibly for assembly of the head region. Essential for efficient processing of 16S rRNA. May be needed both before and after RbfA during the maturation of 16S rRNA. It has affinity for free ribosomal 30S subunits but not for 70S ribosomes. The protein is Ribosome maturation factor RimM of Synechococcus sp. (strain JA-3-3Ab) (Cyanobacteria bacterium Yellowstone A-Prime).